Consider the following 981-residue polypeptide: DNA ligase 4 (981 aa).

The ATP site is built by E320, K322, R327, E380, F424, E484, K489, K506, and K508. The active-site N6-AMP-lysine intermediate is the K322. Residue E380 participates in Mg(2+) binding. E484 is a binding site for Mg(2+). Residues 544–563 form a disordered region; it reads SEKNNPSSYESGSDSDSDSE. BRCT domains are found at residues 721 to 819 and 875 to 980; these read SKAD…PKYV and ERLL…EYAA.

It belongs to the ATP-dependent DNA ligase family. It depends on Mg(2+) as a cofactor.

The protein resides in the nucleus. It catalyses the reaction ATP + (deoxyribonucleotide)n-3'-hydroxyl + 5'-phospho-(deoxyribonucleotide)m = (deoxyribonucleotide)n+m + AMP + diphosphate.. In terms of biological role, DNA ligase involved in DNA non-homologous end joining (NHEJ); required for double-strand break (DSB) repair. The protein is DNA ligase 4 (LIG4) of Eremothecium gossypii (strain ATCC 10895 / CBS 109.51 / FGSC 9923 / NRRL Y-1056) (Yeast).